A 161-amino-acid polypeptide reads, in one-letter code: ATP synthase subunit b 1 (161 aa).

The helical transmembrane segment at 5–25 (PETWVAIAFLLLMGVFAYVGV) threads the bilayer.

Belongs to the ATPase B chain family. As to quaternary structure, F-type ATPases have 2 components, F(1) - the catalytic core - and F(0) - the membrane proton channel. F(1) has five subunits: alpha(3), beta(3), gamma(1), delta(1), epsilon(1). F(0) has three main subunits: a(1), b(2) and c(10-14). The alpha and beta chains form an alternating ring which encloses part of the gamma chain. F(1) is attached to F(0) by a central stalk formed by the gamma and epsilon chains, while a peripheral stalk is formed by the delta and b chains.

Its subcellular location is the cell inner membrane. Functionally, f(1)F(0) ATP synthase produces ATP from ADP in the presence of a proton or sodium gradient. F-type ATPases consist of two structural domains, F(1) containing the extramembraneous catalytic core and F(0) containing the membrane proton channel, linked together by a central stalk and a peripheral stalk. During catalysis, ATP synthesis in the catalytic domain of F(1) is coupled via a rotary mechanism of the central stalk subunits to proton translocation. In terms of biological role, component of the F(0) channel, it forms part of the peripheral stalk, linking F(1) to F(0). The chain is ATP synthase subunit b 1 from Nitrobacter winogradskyi (strain ATCC 25391 / DSM 10237 / CIP 104748 / NCIMB 11846 / Nb-255).